The chain runs to 149 residues: UPF0178 protein VC0395_A0405/VC395_0897 (149 aa).

This sequence belongs to the UPF0178 family.

This is UPF0178 protein VC0395_A0405/VC395_0897 from Vibrio cholerae serotype O1 (strain ATCC 39541 / Classical Ogawa 395 / O395).